The primary structure comprises 243 residues: Venom nerve growth factor 5 (243 aa).

Residues 1–18 (MSMLCYTLIIAFLIGIWA) form the signal peptide. A propeptide spanning residues 19–125 (APKSEDNVPL…TLNRNIRTKR (107 aa)) is cleaved from the precursor. Positions 47–66 (GLKTSRNTDQRHPAPKKAED) are enriched in basic and acidic residues. Residues 47–67 (GLKTSRNTDQRHPAPKKAEDQ) are disordered. 3 disulfides stabilise this stretch: C139/C204, C182/C232, and C192/C234. N148 carries an N-linked (GlcNAc...) asparagine glycan.

It belongs to the NGF-beta family. Homodimer; non-covalently linked. In terms of tissue distribution, expressed by the venom gland.

It localises to the secreted. Nerve growth factor is important for the development and maintenance of the sympathetic and sensory nervous systems. It stimulates division and differentiation of sympathetic and embryonic sensory neurons as well as basal forebrain cholinergic neurons in the brain. Its relevance in the snake venom is not clear. However, it has been shown to inhibit metalloproteinase-dependent proteolysis of platelet glycoprotein Ib alpha, suggesting a metalloproteinase inhibition to prevent metalloprotease autodigestion and/or protection against prey proteases. Binds a lipid between the two protein chains in the homodimer. The lipid-bound form promotes histamine relase from mouse mast cells, contrary to the lipid-free form. The protein is Venom nerve growth factor 5 of Tropidechis carinatus (Australian rough-scaled snake).